The primary structure comprises 445 residues: GRAM domain-containing protein 2B (445 aa).

The residue at position 1 (Met1) is an N-acetylmethionine. Over residues 1–10 (MVKKPISSSD) the composition is skewed to polar residues. A disordered region spans residues 1 to 119 (MVKKPISSSD…RKKSSSSSQY (119 aa)). The segment covering 18-37 (PSSPKSSAGASHSSTDSPSS) has biased composition (low complexity). Polar residues-rich tracts occupy residues 56-68 (KSPT…SSVE) and 82-93 (SKSSFDGSNLLS). Basic and acidic residues predominate over residues 94–112 (DKNDCKTESKADSKTERKK). The GRAM domain maps to 123-190 (MHFHKLFLDV…FSVTLIKKTK (68 aa)). Phosphoserine occurs at positions 238, 255, and 265. Positions 277–331 (DLEGYSSSGSQTPESENSRDFHVTESQTVLNVTKGETKPPRTDAHGSRAPDGKAK) are disordered. The segment covering 281–291 (YSSSGSQTPES) has biased composition (polar residues). A compositionally biased stretch (basic and acidic residues) spans 311-330 (GETKPPRTDAHGSRAPDGKA).

The polypeptide is GRAM domain-containing protein 2B (Gramd2b) (Rattus norvegicus (Rat)).